The chain runs to 272 residues: Tryptophan synthase alpha chain (272 aa).

Active-site proton acceptor residues include Glu-49 and Glu-60.

The protein belongs to the TrpA family. Tetramer of two alpha and two beta chains.

It catalyses the reaction (1S,2R)-1-C-(indol-3-yl)glycerol 3-phosphate + L-serine = D-glyceraldehyde 3-phosphate + L-tryptophan + H2O. It participates in amino-acid biosynthesis; L-tryptophan biosynthesis; L-tryptophan from chorismate: step 5/5. The alpha subunit is responsible for the aldol cleavage of indoleglycerol phosphate to indole and glyceraldehyde 3-phosphate. This chain is Tryptophan synthase alpha chain, found in Legionella pneumophila (strain Lens).